The following is a 292-amino-acid chain: Ribosomal RNA small subunit methyltransferase A (292 aa).

S-adenosyl-L-methionine contacts are provided by Asn28, Leu30, Gly55, Glu76, Asp101, and Asn126.

Belongs to the class I-like SAM-binding methyltransferase superfamily. rRNA adenine N(6)-methyltransferase family. RsmA subfamily.

The protein localises to the cytoplasm. It catalyses the reaction adenosine(1518)/adenosine(1519) in 16S rRNA + 4 S-adenosyl-L-methionine = N(6)-dimethyladenosine(1518)/N(6)-dimethyladenosine(1519) in 16S rRNA + 4 S-adenosyl-L-homocysteine + 4 H(+). Specifically dimethylates two adjacent adenosines (A1518 and A1519) in the loop of a conserved hairpin near the 3'-end of 16S rRNA in the 30S particle. May play a critical role in biogenesis of 30S subunits. The sequence is that of Ribosomal RNA small subunit methyltransferase A from Bacillus anthracis.